Reading from the N-terminus, the 216-residue chain is uncharacterized protein (216 aa).

Residues 7-29 (ILVIFFLIFFIGFEFSDMTLAFI) traverse the membrane as a helical segment.

It localises to the membrane. This is an uncharacterized protein from Archaeoglobus fulgidus (strain ATCC 49558 / DSM 4304 / JCM 9628 / NBRC 100126 / VC-16).